The sequence spans 151 residues: Protein SprT-like (151 aa).

The SprT-like domain occupies 6–147; the sequence is LQRMVENLSE…GHCNGKLRMK (142 aa). Residue His-67 participates in Zn(2+) binding. Glu-68 is a catalytic residue. Residue His-71 participates in Zn(2+) binding.

The protein belongs to the SprT family. The cofactor is Zn(2+).

The protein localises to the cytoplasm. This is Protein SprT-like from Staphylococcus aureus (strain Mu3 / ATCC 700698).